Here is a 475-residue protein sequence, read N- to C-terminus: Gamma-aminobutyric acid receptor subunit gamma-2 (475 aa).

The signal sequence occupies residues 1-39 (MSSPNIWSTGSSVYSTPVFSQKMTLWILLLLSLYPGLTR). Residues 41–275 (KSDDDYEDYA…FDLSRRMGYF (235 aa)) lie on the Extracellular side of the membrane. N-linked (GlcNAc...) asparagine glycans are attached at residues Asn52 and Asn129. Cys190 and Cys204 are oxidised to a cystine. The N-linked (GlcNAc...) asparagine glycan is linked to Asn247. A helical transmembrane segment spans residues 276 to 296 (TIQTYIPCTLIVVLSWVSFWI). Over 297–302 (NKDAVP) the chain is Cytoplasmic. The helical transmembrane segment at 303–322 (ARTSLGITTVLTMTTLSTIA) threads the bilayer. Over 323–334 (RKSLPKVSYVTA) the chain is Extracellular. A helical transmembrane segment spans residues 335–359 (MDLFVSVCFIFVFSALVEYGTLHYF). Topologically, residues 360–451 (VSNRKPSKDK…IHIRIAKMDS (92 aa)) are cytoplasmic. Residue Ser382 is modified to Phosphoserine; by PKC. A helical transmembrane segment spans residues 452-472 (YARIFFPTAFCLFNLVYWVSY). The Extracellular segment spans residues 473 to 475 (LYL).

Belongs to the ligand-gated ion channel (TC 1.A.9) family. Gamma-aminobutyric acid receptor (TC 1.A.9.5) subfamily. GABRG2 sub-subfamily. As to quaternary structure, heteropentamer, formed by a combination of alpha (GABRA1-6), beta (GABRB1-3), gamma (GABRG1-3), delta (GABRD), epsilon (GABRE), rho (GABRR1-3), pi (GABRP) and theta (GABRQ) chains, each subunit exhibiting distinct physiological and pharmacological properties. Interacts with GABARAP. Interacts with KIF21B. Identified in a complex of 720 kDa composed of LHFPL4, NLGN2, GABRA1, GABRB2, GABRG2 and GABRB3. Interacts with LHFPL4. Interacts with SHISA7; interaction leads to the regulation of GABA(A) receptor trafficking, channel deactivation kinetics and pharmacology. Post-translationally, palmitoylated by ZDHHC3/GODZ; required for the accumulation of GABA(A) receptors at the postsynaptic membrane of inhibitory GABAergic synapses. In terms of processing, glycosylated.

It localises to the postsynaptic cell membrane. It is found in the cell membrane. The protein resides in the cell projection. The protein localises to the dendrite. Its subcellular location is the cytoplasmic vesicle membrane. The enzyme catalyses chloride(in) = chloride(out). Allosterically activated by benzodiazepines. Activated by pentobarbital. Inhibited by the antagonist bicuculline. Inhibited by zinc ions. Potentiated by histamine. In terms of biological role, gamma subunit of the heteropentameric ligand-gated chloride channel gated by gamma-aminobutyric acid (GABA), a major inhibitory neurotransmitter in the brain. GABA-gated chloride channels, also named GABA(A) receptors (GABAAR), consist of five subunits arranged around a central pore and contain GABA active binding site(s) located at the alpha and beta subunit interface(s). When activated by GABA, GABAARs selectively allow the flow of chloride anions across the cell membrane down their electrochemical gradient. Gamma-2/GABRG2-containing GABAARs are found at both synaptic and extrasynaptic sites. Chloride influx into the postsynaptic neuron following GABAAR opening decreases the neuron ability to generate a new action potential, thereby reducing nerve transmission. GABAARs containing alpha-1 and beta-2 or -3 subunits exhibit synaptogenic activity; the gamma-2 subunit being necessary but not sufficient to induce rapid synaptic contacts formation. Extrasynaptic gamma-2-containing receptors contribute to the tonic GABAergic inhibition. GABAARs function also as histamine receptor where histamine binds at the interface of two neighboring beta subunits and potentiates GABA response in a gamma-2 subunit-controlled manner. The protein is Gamma-aminobutyric acid receptor subunit gamma-2 (GABRG2) of Bos taurus (Bovine).